A 381-amino-acid polypeptide reads, in one-letter code: Beta-lactamase (381 aa).

An N-terminal signal peptide occupies residues 1–20 (MMKKSICCALLLTASFSTFA). The active-site Acyl-ester intermediate is the Ser-84. The active-site Proton acceptor is the Tyr-170. Position 335 to 337 (335 to 337 (KTG)) interacts with substrate.

It belongs to the class-C beta-lactamase family.

The protein resides in the periplasm. The catalysed reaction is a beta-lactam + H2O = a substituted beta-amino acid. Its activity is regulated as follows. Sulbactam is an effective progressive inhibitor but a poor competitive inhibitor. Functionally, this protein is a serine beta-lactamase with a substrate specificity for cephalosporins. The sequence is that of Beta-lactamase (ampC) from Citrobacter freundii.